A 122-amino-acid polypeptide reads, in one-letter code: Pollen allergen Phl p 2 (122 aa).

Positions 1-26 are cleaved as a signal peptide; that stretch reads MSMASSSSSSLLAMAVLAALFAGAWC. One can recognise an Expansin-like CBD domain in the interval 41–120; that stretch reads KHLAVLVKYE…KYTIGATYAP (80 aa).

This sequence belongs to the expansin family. Expansin B subfamily. In terms of tissue distribution, pollen specific.

The protein resides in the secreted. This chain is Pollen allergen Phl p 2 (PHLPII), found in Phleum pratense (Common timothy).